Here is a 212-residue protein sequence, read N- to C-terminus: Uridine kinase (212 aa).

13–20 (GGSGSGKT) is an ATP binding site.

This sequence belongs to the uridine kinase family.

Its subcellular location is the cytoplasm. It carries out the reaction uridine + ATP = UMP + ADP + H(+). The enzyme catalyses cytidine + ATP = CMP + ADP + H(+). Its pathway is pyrimidine metabolism; CTP biosynthesis via salvage pathway; CTP from cytidine: step 1/3. It participates in pyrimidine metabolism; UMP biosynthesis via salvage pathway; UMP from uridine: step 1/1. The protein is Uridine kinase of Bacillus mycoides (strain KBAB4) (Bacillus weihenstephanensis).